The primary structure comprises 355 residues: Uroporphyrinogen decarboxylase (355 aa).

Substrate-binding positions include 27-31 (RQAGR), Asp-77, Tyr-154, Thr-209, and His-328.

It belongs to the uroporphyrinogen decarboxylase family. As to quaternary structure, homodimer.

The protein localises to the cytoplasm. The enzyme catalyses uroporphyrinogen III + 4 H(+) = coproporphyrinogen III + 4 CO2. The protein operates within porphyrin-containing compound metabolism; protoporphyrin-IX biosynthesis; coproporphyrinogen-III from 5-aminolevulinate: step 4/4. Functionally, catalyzes the decarboxylation of four acetate groups of uroporphyrinogen-III to yield coproporphyrinogen-III. The chain is Uroporphyrinogen decarboxylase from Aliivibrio salmonicida (strain LFI1238) (Vibrio salmonicida (strain LFI1238)).